The following is a 331-amino-acid chain: MEIINGPVLPRYAAPATGALTSDAKISGQLLRRVHLRRRACGLQGDHYRAARRFFGFPSERHARSGWVWPVCCSYGSSSDGDGAAAADYDASGEEFVNSSVMEAVELRSVSDGFVIKMRDGKNLRCVQNNPRVLRLRDSAPHHAIVLKMEDGSDLLLPIIVMETPSIMLLAALRNIRIPRPTIYNVVKEMTERMGYAVRLVRITEMVHDAYYSRLYLAKIGNEEETISLDLKPSDAINIAFRCKVPIQVNRRIAYNNGLKVVQPTPSESYVSSDQFQYTRLDRPDDQPCFEAQEFDLVRNMLVAAVEERYKDAAQYRDQLFMFRAKKKNMI.

The BFN domain maps to 126-261; it reads CVQNNPRVLR…RIAYNNGLKV (136 aa). Positions 291–326 constitute a UVR domain; the sequence is EAQEFDLVRNMLVAAVEERYKDAAQYRDQLFMFRAK.

Belongs to the bifunctional nuclease family.

The protein resides in the nucleus. Bifunctional nuclease with both RNase and DNase activities. Involved in basal defense response. Participates in abscisic acid-derived callose deposition following infection by a necrotrophic pathogen. In Oryza sativa subsp. japonica (Rice), this protein is Bifunctional nuclease 1 (BBD1).